The sequence spans 613 residues: Zinc finger protein 665 (613 aa).

C2H2-type zinc fingers lie at residues 113 to 135, 141 to 163, 169 to 191, 197 to 219, 225 to 247, 253 to 275, 281 to 303, 309 to 331, 337 to 359, 365 to 387, 393 to 415, 421 to 443, 449 to 471, 477 to 499, 505 to 527, 533 to 555, 561 to 583, and 589 to 611; these read YKCDECGKVFNQNSRLTSHKRIH, YRCNECGKAFTVRSNLTIHQVIH, YKCNECGKVFSQPSNLAGHQRIH, YKCNECGKAFRAHSKLTTHQVIH, YKCNECGKCFTQNSHLASHRRIH, YKCNECGKAFSVRSSLTTHQTIH, YKCNECGKVFRHNSYLTKHRRVH, YKCNECGKAFSMHSNLTKHQIIH, FKCNECVKVFTQYSHLANHRRIH, YRCDECGKAFSVRSSLTTHQAIH, YKCNDCGKVFTQNSHLASHRGIH, YKCDECGKAFSQTSQLARHWRVH, YKCNECGKAFSVHSSLTTHQTIH, YKCNDCGKVFRHNSYLAVHQRIH, YKCNECGKAFSVHSNLATHQVIH, YKCNECGKVFTQNSHLANHRRIH, YRCNECGKAFSVRSTLTTHMAIH, and YKCNECGKVFTQNSNLAKHRRIH.

This sequence belongs to the krueppel C2H2-type zinc-finger protein family.

The protein resides in the nucleus. Its function is as follows. May be involved in transcriptional regulation. The sequence is that of Zinc finger protein 665 (ZNF665) from Pongo abelii (Sumatran orangutan).